The chain runs to 194 residues: Amidophosphoribosyltransferase (194 aa).

A propeptide spanning residues 1–11 (MPHEPKGLNEE) is cleaved from the precursor. Cysteine 12 (nucleophile) is an active-site residue. The 183-residue stretch at 12–194 (CGVFGVWGNP…PHGFRPMVVG (183 aa)) folds into the Glutamine amidotransferase type-2 domain.

The protein in the C-terminal section; belongs to the purine/pyrimidine phosphoribosyltransferase family.

It catalyses the reaction 5-phospho-beta-D-ribosylamine + L-glutamate + diphosphate = 5-phospho-alpha-D-ribose 1-diphosphate + L-glutamine + H2O. It participates in purine metabolism; IMP biosynthesis via de novo pathway; N(1)-(5-phospho-D-ribosyl)glycinamide from 5-phospho-alpha-D-ribose 1-diphosphate: step 1/2. Functionally, catalyzes the formation of phosphoribosylamine from phosphoribosylpyrophosphate (PRPP) and glutamine. In Lacticaseibacillus casei (Lactobacillus casei), this protein is Amidophosphoribosyltransferase.